Reading from the N-terminus, the 479-residue chain is Heparin cofactor 2 (479 aa).

A signal peptide spans 1 to 23 (MKHPAYTLLLSLIMSMCAGSKGL). The N-linked (GlcNAc...) asparagine glycan is linked to asparagine 31. 2 tandem repeats follow at residues 55–65 (GEEDDDYLDLE) and 69–79 (SEDDDYIYVVD). The tract at residues 55–79 (GEEDDDYLDLEKLLSEDDDYIYVVD) is 2 X 11 AA approximate repeats, Asp/Glu-rich (acidic) (hirudin-like). Sulfotyrosine is present on residues tyrosine 61 and tyrosine 74. Residue asparagine 168 is glycosylated (N-linked (GlcNAc...) asparagine). A glycosaminoglycan-binding site region spans residues 172-192 (KYEVTTIHNLFRKLTHRLFRR). N-linked (GlcNAc...) asparagine glycans are attached at residues asparagine 367 and asparagine 403.

The protein belongs to the serpin family. Different composition of the N-linked oligosaccharides appears to yield a 68-kDa and a 72-kDa form.

Functionally, thrombin inhibitor activated by the glycosaminoglycans, heparin or dermatan sulfate. In the presence of the latter, HC-II becomes the predominant thrombin inhibitor in place of antithrombin III (AT). The protein is Heparin cofactor 2 (Serpind1) of Rattus norvegicus (Rat).